We begin with the raw amino-acid sequence, 184 residues long: NADH-quinone oxidoreductase subunit B (184 aa).

[4Fe-4S] cluster-binding residues include cysteine 37, cysteine 38, cysteine 103, and cysteine 132.

This sequence belongs to the complex I 20 kDa subunit family. As to quaternary structure, NDH-1 is composed of 14 different subunits. Subunits NuoB, C, D, E, F, and G constitute the peripheral sector of the complex. It depends on [4Fe-4S] cluster as a cofactor.

The protein resides in the cell membrane. The catalysed reaction is a quinone + NADH + 5 H(+)(in) = a quinol + NAD(+) + 4 H(+)(out). Functionally, NDH-1 shuttles electrons from NADH, via FMN and iron-sulfur (Fe-S) centers, to quinones in the respiratory chain. The immediate electron acceptor for the enzyme in this species is believed to be a menaquinone. Couples the redox reaction to proton translocation (for every two electrons transferred, four hydrogen ions are translocated across the cytoplasmic membrane), and thus conserves the redox energy in a proton gradient. The polypeptide is NADH-quinone oxidoreductase subunit B (Mycobacterium sp. (strain JLS)).